Reading from the N-terminus, the 149-residue chain is MRLLVAAFLLLALGDLGPGGAVHFKDCGSAVGVIKELNVNPCPAQPCKLHKGQSYSVNVTFTSNIPSQSSKAVVHGIVLGVAVPFPIPEADGCKSGINCPIQKDKTYSYLNKLPVKNEYPSIKLVVQWMLLGDNNQHLFCWEIPVQIEG.

An N-terminal signal peptide occupies residues 1 to 21 (MRLLVAAFLLLALGDLGPGGA). Disulfide bonds link C27/C140, C42/C47, and C93/C99. Residue N58 is glycosylated (N-linked (GlcNAc...) asparagine). K116 is modified (N6-acetyllysine).

It belongs to the NPC2 family. In terms of assembly, interacts with NPC1 (via the second lumenal domain) in a cholestrol-dependent manner. Interacts with NUS1/NgBR, the interaction stabilizes NCP2 and regulates cholesterol trafficking. Interacts with DHDDS. Interacts with NEDD4L (via C2 domain). Interacts with NPC1L1. Epididymis. High levels are found in the caput and corpus regions. Weaker levels in the distal cauda and in the efferent ducts.

Its subcellular location is the secreted. It is found in the endoplasmic reticulum. It localises to the lysosome. The catalysed reaction is cholesterol(in) = cholesterol(out). Intracellular cholesterol transporter which acts in concert with NPC1 and plays an important role in the egress of cholesterol from the lysosomal compartment. Unesterified cholesterol that has been released from LDLs in the lumen of the late endosomes/lysosomes is transferred by NPC2 to the cholesterol-binding pocket in the N-terminal domain of NPC1. May bind and mobilize cholesterol that is associated with membranes. NPC2 binds cholesterol with a 1:1 stoichiometry. Can bind a variety of sterols, including lathosterol, desmosterol and the plant sterols stigmasterol and beta-sitosterol. The secreted form of NCP2 regulates biliary cholesterol secretion via stimulation of ABCG5/ABCG8-mediated cholesterol transport. The sequence is that of NPC intracellular cholesterol transporter 2 from Canis lupus familiaris (Dog).